Consider the following 1429-residue polypeptide: uncharacterized protein (1429 aa).

Disordered regions lie at residues M1–E76 and P103–K130. Over residues S14–V29 the composition is skewed to low complexity. A compositionally biased stretch (polar residues) spans S109–E121. The next 2 helical transmembrane spans lie at L197–I217 and F225–S245. Residues D266–S471 form the SMP-LTD domain. 2 C2 domains span residues W462–Y584 and T738–A858. The disordered stretch occupies residues N899–S932. The C2 3 domain maps to T1060 to I1177. Positions E1280–A1303 are disordered. Over residues A1294–A1303 the composition is skewed to low complexity.

It localises to the membrane. This is an uncharacterized protein from Schizosaccharomyces pombe (strain 972 / ATCC 24843) (Fission yeast).